We begin with the raw amino-acid sequence, 1312 residues long: Angiotensin-converting enzyme (1312 aa).

An N-terminal signal peptide occupies residues Met1–Ala34. Residues Leu35–Gln1264 are Extracellular-facing. Peptidase M2 domains lie at Ser45–Pro629 and Glu648–Pro1227. N-linked (GlcNAc...) asparagine glycans are attached at residues Asn59, Asn79, Asn116, Asn151, and Asn165. Cys162 and Cys170 form a disulfide bridge. Tyr236 provides a ligand contact to chloride. N-linked (GlcNAc...) asparagine glycosylation occurs at Asn323. Cys364 and Cys382 form a disulfide bridge. His395 serves as a coordination point for Zn(2+). Glu396 acts as the Proton acceptor 1 in catalysis. Residues His399 and Glu423 each coordinate Zn(2+). The N-linked (GlcNAc...) asparagine glycan is linked to Asn514. Residue His525 is the Proton donor 1 of the active site. Arg534 contributes to the chloride binding site. Cys550 and Cys562 are oxidised to a cystine. An N-linked (GlcNAc...) asparagine glycan is attached at Asn682. Asn700 and Asn719 each carry an N-linked (GlcNAc...) (complex) asparagine glycan. An intrachain disulfide couples Cys762 to Cys768. Asn765 carries an N-linked (GlcNAc...) asparagine glycan. 2 residues coordinate chloride: Arg796 and Tyr834. Asn947 carries N-linked (GlcNAc...) asparagine glycosylation. A disulfide bond links Cys962 and Cys980. His993 contributes to the Zn(2+) binding site. Catalysis depends on Glu994, which acts as the Proton acceptor 2. Positions 997 and 1021 each coordinate Zn(2+). Trp1095 and Arg1099 together coordinate chloride. Residue His1123 is the Proton donor 2 of the active site. Arg1132 contributes to the chloride binding site. A disulfide bridge connects residues Cys1148 and Cys1160. N-linked (GlcNAc...) asparagine glycosylation occurs at Asn1196. Positions His1220–Arg1261 are juxtamembrane stalk. Residues Trp1265–Leu1281 traverse the membrane as a helical segment. Residues Ala1282–Ser1312 lie on the Cytoplasmic side of the membrane. Residue Ser1305 is modified to Phosphoserine.

Belongs to the peptidase M2 family. In terms of assembly, monomer and homodimer; homodimerizes following binding to an inhibitor. Interacts with calmodulin (CALM1, CALM2 or CALM3); interaction takes place in the cytoplasmic region and regulates phosphorylation and proteolytic cleavage. It depends on Zn(2+) as a cofactor. Chloride serves as cofactor. Post-translationally, produced following proteolytic cleavage by secretase enzymes that cleave the transmembrane form in the juxtamembrane stalk region upstream of the transmembrane region. Cleavage can take place at different sites of the juxtamembrane stalk region. Phosphorylated by CK2 on Ser-1305; which allows membrane retention. Phosphorylated on tyrosine residues on its extracellular part, promoting cleavage by secretase enzymes and formation of the soluble form (Angiotensin-converting enzyme, soluble form). As to expression, highly expressed in kidney and lung; not expressed in the liver. In the brain, expressed in the cerebral cortex, hippocampus, cerebellum and basal ganglia/brainstem. Highly expressed in dopamine receptor DRD1-expressing neurons in the dorsal striatum and the nucleus accumbens of the brain. Specifically expressed in spermatocytes, adult testis.

It is found in the cell membrane. It localises to the cytoplasm. Its subcellular location is the secreted. It carries out the reaction Release of a C-terminal dipeptide, oligopeptide-|-Xaa-Yaa, when Xaa is not Pro, and Yaa is neither Asp nor Glu. Thus, conversion of angiotensin I to angiotensin II, with increase in vasoconstrictor activity, but no action on angiotensin II.. It catalyses the reaction angiotensin I + H2O = L-histidyl-L-leucine + angiotensin II. The enzyme catalyses bradykinin + H2O = L-Phe-L-Arg + bradykinin(1-7). The catalysed reaction is substance P + H2O = substance P(1-9) + L-Leu-L-Met-NH2. It carries out the reaction substance P + H2O = substance P(1-8) + Gly-L-Leu-L-Met-NH2. It catalyses the reaction substance P + H2O = L-Phe-L-Phe-Gly-L-Leu-L-Met-NH2 + substance P(1-6). The enzyme catalyses neurotensin + H2O = neurotensin(1-11) + L-isoleucyl-L-leucine. The catalysed reaction is goralatide + H2O = N-acetyl-L-seryl-L-aspartate + L-lysyl-L-proline. It carries out the reaction Met-enkephalin + H2O = L-phenylalanyl-L-methionine + L-tyrosylglycylglycine. It catalyses the reaction Leu-enkephalin + H2O = L-tyrosylglycylglycine + L-phenylalanyl-L-leucine. The enzyme catalyses Met-enkephalin-Arg-Phe + H2O = L-arginyl-L-phenylalanine + Met-enkephalin. Its activity is regulated as follows. The dipeptidyl carboxypeptidase activity is specifically inhibited by lisinopril, captopril and enalaprilat. The N-terminal catalytic domain, but not the C-terminal catalytic domain, is specifically inhibited by the phosphinic peptide RXP 407. The putative GPIase activity is nearly insensitive to captopril. Functionally, dipeptidyl carboxypeptidase that removes dipeptides from the C-terminus of a variety of circulating hormones, such as angiotensin I, bradykinin or enkephalins, thereby playing a key role in the regulation of blood pressure, electrolyte homeostasis or synaptic plasticity. Composed of two similar catalytic domains, each possessing a functional active site, with different selectivity for substrates. Plays a major role in the angiotensin-renin system that regulates blood pressure and sodium retention by the kidney by converting angiotensin I to angiotensin II, resulting in an increase of the vasoconstrictor activity of angiotensin. Also able to inactivate bradykinin, a potent vasodilator, and therefore enhance the blood pressure response. Acts as a regulator of synaptic transmission by mediating cleavage of neuropeptide hormones, such as substance P, neurotensin or enkephalins. Catalyzes degradation of different enkephalin neuropeptides (Met-enkephalin, Leu-enkephalin, Met-enkephalin-Arg-Phe and possibly Met-enkephalin-Arg-Gly-Leu). Acts as a regulator of synaptic plasticity in the nucleus accumbens of the brain by mediating cleavage of Met-enkephalin-Arg-Phe, a strong ligand of Mu-type opioid receptor OPRM1, into Met-enkephalin. Met-enkephalin-Arg-Phe cleavage by ACE decreases activation of OPRM1, leading to long-term synaptic potentiation of glutamate release. Also acts as a regulator of hematopoietic stem cell differentiation by mediating degradation of hemoregulatory peptide N-acetyl-SDKP (AcSDKP). Acts as a regulator of cannabinoid signaling pathway by mediating degradation of hemopressin, an antagonist peptide of the cannabinoid receptor CNR1. Involved in amyloid-beta metabolism by catalyzing degradation of Amyloid-beta protein 40 and Amyloid-beta protein 42 peptides, thereby preventing plaque formation. Catalyzes cleavage of cholecystokinin (maturation of Cholecystokinin-8 and Cholecystokinin-5) and Gonadoliberin-1 (both maturation and degradation) hormones. Degradation of hemoregulatory peptide N-acetyl-SDKP (AcSDKP) and amyloid-beta proteins is mediated by the N-terminal catalytic domain, while angiotensin I and cholecystokinin cleavage is mediated by the C-terminal catalytic region. Soluble form that is released in blood plasma and other body fluids following proteolytic cleavage in the juxtamembrane stalk region. In terms of biological role, isoform produced by alternative promoter usage that is specifically expressed in spermatocytes and adult testis, and which is required for male fertility. In contrast to somatic isoforms, only contains one catalytic domain. Acts as a dipeptidyl carboxypeptidase that removes dipeptides from the C-terminus of substrates. The identity of substrates that are needed for male fertility is unknown. Isoform Testis-specific and isoform Somatic have distinct activities and cannot completely compensate for the loss of the other when expressed in somatic tissues or testis. May also have a glycosidase activity which releases GPI-anchored proteins from the membrane by cleaving the mannose linkage in the GPI moiety. The GPIase activity was reported to be essential for the egg-binding ability of the sperm. This activity is however unclear and has been challenged by other groups, suggesting that it may be indirect. The protein is Angiotensin-converting enzyme of Mus musculus (Mouse).